The chain runs to 198 residues: Protein hunchback (198 aa).

2 disordered regions span residues 16–116 and 158–198; these read SHHH…NPMQ and LTPP…KYMA. Basic residues predominate over residues 17 to 31; the sequence is HHHHHHHAHHSHHQH. Composition is skewed to low complexity over residues 35 to 46 and 68 to 83; these read SNSNSNASSPHQ and QQQQQQQQQQQQQQQQ. The span at 95 to 105 shows a compositional bias: polar residues; it reads PSPSNNDQNSP. Positions 179-198 are enriched in basic and acidic residues; the sequence is EPEKEHDLMSNSSEDMKYMA.

Belongs to the hunchback C2H2-type zinc-finger protein family.

The protein resides in the nucleus. Its function is as follows. Gap class segmentation protein that controls development of head structures. The chain is Protein hunchback (hb) from Drosophila cyrtoloma (Fruit fly).